A 233-amino-acid chain; its full sequence is 2-C-methyl-D-erythritol 4-phosphate cytidylyltransferase (233 aa).

Belongs to the IspD/TarI cytidylyltransferase family. IspD subfamily.

It carries out the reaction 2-C-methyl-D-erythritol 4-phosphate + CTP + H(+) = 4-CDP-2-C-methyl-D-erythritol + diphosphate. The protein operates within isoprenoid biosynthesis; isopentenyl diphosphate biosynthesis via DXP pathway; isopentenyl diphosphate from 1-deoxy-D-xylulose 5-phosphate: step 2/6. In terms of biological role, catalyzes the formation of 4-diphosphocytidyl-2-C-methyl-D-erythritol from CTP and 2-C-methyl-D-erythritol 4-phosphate (MEP). The chain is 2-C-methyl-D-erythritol 4-phosphate cytidylyltransferase from Thiobacillus denitrificans (strain ATCC 25259 / T1).